A 62-amino-acid chain; its full sequence is uncharacterized protein (62 aa).

Residues 28 to 61 (KIESTHPEIAKKLKEAAEKYREVEEILKKAVDMV) are a coiled coil.

This is an uncharacterized protein from Archaeoglobus fulgidus (strain ATCC 49558 / DSM 4304 / JCM 9628 / NBRC 100126 / VC-16).